The following is a 251-amino-acid chain: 5'-nucleotidase SurE (251 aa).

A divalent metal cation is bound by residues Asp-9, Asp-10, Ser-40, and Asn-94.

It belongs to the SurE nucleotidase family. Requires a divalent metal cation as cofactor.

It localises to the cytoplasm. The enzyme catalyses a ribonucleoside 5'-phosphate + H2O = a ribonucleoside + phosphate. Functionally, nucleotidase that shows phosphatase activity on nucleoside 5'-monophosphates. This chain is 5'-nucleotidase SurE, found in Aquifex aeolicus (strain VF5).